Consider the following 628-residue polypeptide: Very-long-chain aldehyde decarbonylase GL1-2 (628 aa).

Helical transmembrane passes span 37-57 (GAAP…ARGL), 131-151 (GWAI…YWAH), 191-211 (VVIG…VGLV), 299-319 (DFVF…PFVL), and 331-351 (FVLL…WCCS). Positions 137–277 (LLHVLVAEPL…MPIFDLLGGT (141 aa)) constitute a Fatty acid hydroxylase domain.

The protein belongs to the sterol desaturase family. In terms of assembly, homodimer. In terms of tissue distribution, expressed in germinating seeds, radicals and leaves.

The protein localises to the endoplasmic reticulum membrane. The catalysed reaction is a long-chain fatty aldehyde + 2 NADPH + O2 + H(+) = a long-chain alkane + formate + 2 NADP(+) + H2O. In terms of biological role, aldehyde decarbonylase involved in the conversion of aldehydes to alkanes. Core component of a very-long-chain alkane synthesis complex. Required for the formation of wax layers conferring cuticular permeability and drought tolerance. This chain is Very-long-chain aldehyde decarbonylase GL1-2, found in Oryza sativa subsp. japonica (Rice).